A 541-amino-acid polypeptide reads, in one-letter code: Membrane protein insertase YidC (541 aa).

6 helical membrane passes run 6 to 26 (NILL…WQAD), 325 to 345 (LVVD…LLMF), 349 to 369 (FVGN…GLLF), 420 to 440 (GGCL…WVLL), 457 to 477 (LSVQ…MFVM), and 500 to 520 (VIFT…WLVG).

Belongs to the OXA1/ALB3/YidC family. Type 1 subfamily. In terms of assembly, interacts with the Sec translocase complex via SecD. Specifically interacts with transmembrane segments of nascent integral membrane proteins during membrane integration.

It is found in the cell inner membrane. Functionally, required for the insertion and/or proper folding and/or complex formation of integral membrane proteins into the membrane. Involved in integration of membrane proteins that insert both dependently and independently of the Sec translocase complex, as well as at least some lipoproteins. Aids folding of multispanning membrane proteins. This is Membrane protein insertase YidC from Shewanella baltica (strain OS195).